The primary structure comprises 386 residues: uncharacterized protein (386 aa).

12 helical membrane-spanning segments follow: residues 8–28 (VFVI…IAPI), 43–63 (IGLI…PVGV), 79–99 (FFYG…GFLI), 102–122 (IFTG…IAAI), 134–154 (IFNS…GILA), 156–176 (MYGI…AAII), 216–236 (FIIN…LALY), 241–261 (NITI…MALL), 272–292 (LGNI…YLLS), 297–317 (FLTI…SSTA), 342–362 (INIG…ILGI), and 365–385 (MYKF…LRIE).

This sequence belongs to the major facilitator superfamily.

The protein localises to the cell membrane. This is an uncharacterized protein from Methanocaldococcus jannaschii (strain ATCC 43067 / DSM 2661 / JAL-1 / JCM 10045 / NBRC 100440) (Methanococcus jannaschii).